A 284-amino-acid chain; its full sequence is Putative ribosome biogenesis protein C306.07c (284 aa).

The segment at 264 to 284 is disordered; that stretch reads LKKSELRAQKRGSSGEGKGNK.

Belongs to the universal ribosomal protein uL1 family. Highly divergent. As to quaternary structure, component of the 90S pre-ribosomes.

The protein localises to the nucleus. Its subcellular location is the nucleolus. Functionally, involved in rRNA-processing and ribosome biosynthesis. This Schizosaccharomyces pombe (strain 972 / ATCC 24843) (Fission yeast) protein is Putative ribosome biogenesis protein C306.07c.